The chain runs to 219 residues: Histone H1.4 (219 aa).

Residues 1-15 show a composition bias toward low complexity; the sequence is MSETAPAAPAAPAPA. Positions 1-41 are disordered; it reads MSETAPAAPAAPAPAEKTPVKKKARKAAGGAKRKTSGPPVS. S2 is subject to N-acetylserine. At S2 the chain carries Phosphoserine. N6-acetyllysine is present on K17. The residue at position 18 (T18) is a Phosphothreonine. Basic residues predominate over residues 20–35; it reads VKKKARKAAGGAKRKT. The residue at position 26 (K26) is an N6-acetyllysine; alternate. K26 bears the N6-methyllysine; alternate mark. K34 carries the post-translational modification N6-(beta-hydroxybutyryl)lysine; alternate. The residue at position 34 (K34) is an N6-succinyllysine; alternate. Phosphoserine is present on S36. Residues 36 to 109 form the H15 domain; sequence SGPPVSELIT…GASGSFKLNK (74 aa). At K52 the chain carries N6-(beta-hydroxybutyryl)lysine. Citrulline is present on R54. N6-(beta-hydroxybutyryl)lysine occurs at positions 64, 85, 90, and 106. The segment at 92 to 219 is disordered; that stretch reads TLVQTKGTGA…KPKKTAAKKK (128 aa). Over residues 119 to 140 the composition is skewed to basic residues; it reads KAKRAGAAKAKKPAGAAKKPKK. T146 is subject to Phosphothreonine. Composition is skewed to basic residues over residues 149–160 and 168–185; these read KSTKKTPKKAKK and KKAK…KKAP. An ADP-ribosylserine modification is found at S150. Position 187 is a phosphoserine (S187). A compositionally biased stretch (basic residues) spans 192–219; sequence KTVKPKAAKPKTSKPKAAKPKKTAAKKK.

This sequence belongs to the histone H1/H5 family. In terms of processing, citrullination at Arg-54 (H1R54ci) by PADI4 takes place within the DNA-binding site of H1 and results in its displacement from chromatin and global chromatin decondensation, thereby promoting pluripotency and stem cell maintenance. Post-translationally, ADP-ribosylated on Ser-55, Ser-113 and Ser-150 in response to DNA damage. H1 histones are progressively phosphorylated during the cell cycle, becoming maximally phosphorylated during late G2 phase and M phase, and being dephosphorylated sharply thereafter. In terms of processing, acetylated at Lys-26. Deacetylated at Lys-26 by SIRT1. Post-translationally, hydroxybutyrylation of histones is induced by starvation.

The protein localises to the nucleus. It is found in the chromosome. Histone H1 protein binds to linker DNA between nucleosomes forming the macromolecular structure known as the chromatin fiber. Histones H1 are necessary for the condensation of nucleosome chains into higher-order structured fibers. Also acts as a regulator of individual gene transcription through chromatin remodeling, nucleosome spacing and DNA methylation. This is Histone H1.4 from Mus musculus (Mouse).